The chain runs to 197 residues: MRIGVLALQGDIEEHEQAIRDSSRSLGFKVDVVRVKRPGDLKGLSGILIPGGESTTIWKLSQGELMLALRDEILNGLPAMGTCAGAIFMAKEVKDRVVGETGQGILGLMDMTVIRNYYGRQRESFEMDLNLEGIGSVRAVFIRAPAIVRIWGKANALSELNGTYPAVIQDNMLALTFHPELTTSKVHEWFLRELVLK.

52–54 (GES) serves as a coordination point for L-glutamine. Cys-83 acts as the Nucleophile in catalysis. Residues Arg-115 and 142–143 (IR) contribute to the L-glutamine site. Active-site charge relay system residues include His-178 and Glu-180.

The protein belongs to the glutaminase PdxT/SNO family. In the presence of PdxS, forms a dodecamer of heterodimers. Only shows activity in the heterodimer.

The catalysed reaction is aldehydo-D-ribose 5-phosphate + D-glyceraldehyde 3-phosphate + L-glutamine = pyridoxal 5'-phosphate + L-glutamate + phosphate + 3 H2O + H(+). The enzyme catalyses L-glutamine + H2O = L-glutamate + NH4(+). Its pathway is cofactor biosynthesis; pyridoxal 5'-phosphate biosynthesis. Its function is as follows. Catalyzes the hydrolysis of glutamine to glutamate and ammonia as part of the biosynthesis of pyridoxal 5'-phosphate. The resulting ammonia molecule is channeled to the active site of PdxS. The polypeptide is Pyridoxal 5'-phosphate synthase subunit PdxT (Korarchaeum cryptofilum (strain OPF8)).